A 430-amino-acid polypeptide reads, in one-letter code: Xaa-Pro aminopeptidase (430 aa).

Asp-254, Asp-265, His-348, Glu-377, and Glu-400 together coordinate Mn(2+).

It belongs to the peptidase M24B family. Homotetramer. Mn(2+) is required as a cofactor.

The enzyme catalyses Release of any N-terminal amino acid, including proline, that is linked to proline, even from a dipeptide or tripeptide.. The chain is Xaa-Pro aminopeptidase (pepP) from Haemophilus influenzae (strain ATCC 51907 / DSM 11121 / KW20 / Rd).